Reading from the N-terminus, the 450-residue chain is Envelope glycoprotein M (450 aa).

At 1 to 31 the chain is on the intravirion side; that stretch reads MARRGAAVAEEPLLPSSGIVGIGPIEGINWR. Residues 32–52 traverse the membrane as a helical segment; that stretch reads TWLVQVFCFALTTSVLFITLV. Over 53-101 the chain is Virion surface; it reads TASLPQTGYPCFYGSLVDYTQKNHSVVDGVWMRQIAGGVAPTLFLETTS. A helical membrane pass occupies residues 102–122; that stretch reads LVAFLYYTTLVLVAISFYLII. Residues 123–153 are Intravirion-facing; that stretch reads SAVLVRRYARGKECTAVAGCTRPTTTLIASH. A helical transmembrane segment spans residues 154–174; the sequence is VTLVLGTLATWLLQVVILLLS. Residues 175–178 lie on the Virion surface side of the membrane; sequence HKQA. The chain crosses the membrane as a helical span at residues 179-199; sequence VLGAAVYVVHFVSLVFFCMSF. At 200–236 the chain is on the intravirion side; sequence SGLGTASAQYSSNLRILKTNLPALHKMAGPGRAVMTN. A helical transmembrane segment spans residues 237-257; the sequence is LGMGMLGISLPILSLMLGIIL. At 258–270 the chain is on the virion surface side; that stretch reads ANSFHITLWQTVT. Residues 271–291 traverse the membrane as a helical segment; it reads VAVGVFVALGLMFLIIVELIV. Over 292–294 the chain is Intravirion; it reads SHY. A helical membrane pass occupies residues 295 to 315; that stretch reads VHVLVGPALAVLVASSTLAVA. Residues 316–334 are Virion surface-facing; it reads THSYFVHFHAMVSVQAPNL. Residues 335-355 form a helical membrane-spanning segment; sequence ATASKAIVGIMAVISIIMLVV. Residues 356 to 450 lie on the Intravirion side of the membrane; the sequence is RLVRAIMFHK…PERSHRREYR (95 aa).

The protein belongs to the herpesviridae glycoprotein M family. In terms of assembly, interacts (via N-terminus) with gN (via N-terminus). The gM-gN heterodimer forms the gCII complex.

Its subcellular location is the virion membrane. The protein localises to the host Golgi apparatus. It localises to the host trans-Golgi network. It is found in the host endosome membrane. The protein resides in the host nucleus inner membrane. Functionally, envelope glycoprotein important for virion assembly and egress. Plays a role in the correct incorporation of gH-gL into virion membrane. Directs the glycoprotein N (gN) to the host trans-Golgi network. This Equus caballus (Horse) protein is Envelope glycoprotein M.